The chain runs to 686 residues: Forkhead box protein P1 (686 aa).

Polar residues-rich tracts occupy residues 1 to 19 and 279 to 292; these read MMQE…IQNG and IINP…QLSV. Disordered regions lie at residues 1–23 and 279–306; these read MMQE…ASGG and IINP…EEHS. A compositionally biased stretch (basic and acidic residues) spans 295 to 306; the sequence is PKRESLSHEEHS. A C2H2-type zinc finger spans residues 315 to 340; that stretch reads GVCKWPGCEAVCEDFQSFLKHLNSEH. The segment at 357–378 is leucine-zipper; the sequence is VQQLELQLAKDKERLQAMMTHL. Residues 391–395 are CTBP1-binding; sequence PLNLV. Residues 403–412 are compositionally biased toward polar residues; the sequence is TASEASPQSL. The interval 403-440 is disordered; sequence TASEASPQSLPHTPTTPTAPITPVTQGPSVITTTSMHN. The span at 413-427 shows a compositional bias: low complexity; it reads PHTPTTPTAPITPVT. The span at 428 to 439 shows a compositional bias: polar residues; the sequence is QGPSVITTTSMH. The fork-head DNA-binding region spans 474–564; the sequence is RPPFTYASLI…PQKISGNPSL (91 aa). The disordered stretch occupies residues 619 to 686; that stretch reads MEHTNSNGSD…EDEPVNEDIE (68 aa). Polar residues predominate over residues 621 to 632; the sequence is HTNSNGSDSSPG. Residues 676–686 show a composition bias toward acidic residues; the sequence is YEDEPVNEDIE.

It is found in the nucleus. Functionally, transcriptional repressor. The chain is Forkhead box protein P1 (FOXP1) from Gallus gallus (Chicken).